We begin with the raw amino-acid sequence, 101 residues long: Small ribosomal subunit protein uS14 (101 aa).

It belongs to the universal ribosomal protein uS14 family. Part of the 30S ribosomal subunit. Contacts proteins S3 and S10.

Binds 16S rRNA, required for the assembly of 30S particles and may also be responsible for determining the conformation of the 16S rRNA at the A site. The chain is Small ribosomal subunit protein uS14 from Cupriavidus necator (strain ATCC 17699 / DSM 428 / KCTC 22496 / NCIMB 10442 / H16 / Stanier 337) (Ralstonia eutropha).